The primary structure comprises 202 residues: Superoxide dismutase [Mn] (202 aa).

His-27 lines the Mn(2+) pocket. A phosphothreonine mark is found at Thr-34 and Thr-70. 3 residues coordinate Mn(2+): His-82, Asp-164, and His-168.

Belongs to the iron/manganese superoxide dismutase family. As to quaternary structure, homodimer; under aerobic conditions. Under anaerobic conditions it is a component of the so-called 'green protein' complex (GPC), which consists of at least two components, SodA and a nucleoside diphosphate kinase (NDK). Mn(2+) is required as a cofactor.

It is found in the cytoplasm. It carries out the reaction 2 superoxide + 2 H(+) = H2O2 + O2. Functionally, destroys superoxide anion radicals which are normally produced within the cells and which are toxic to biological systems. Active only in homodimeric state. The chain is Superoxide dismutase [Mn] (sodA) from Virgibacillus halodenitrificans (Bacillus halodenitrificans).